The chain runs to 226 residues: Lipid phosphate phosphatase gamma (226 aa).

Residue Met1 is modified to N-acetylmethionine. Transmembrane regions (helical) follow at residues 24–44 (LGHF…GGFV), 52–72 (ELQG…NEFI), 102–122 (FMFF…GFWF), 128–148 (WIMN…RVYL), and 152–174 (TVAQ…FWVV).

This sequence belongs to the PA-phosphatase related phosphoesterase family. As to expression, expressed in root tips, root branch points, vascular tissue of cotyledons and leaves, pistil, anthers and filaments.

It localises to the plastid. It is found in the chloroplast inner membrane. Its activity is regulated as follows. Inhibited by Mg(2+). Its function is as follows. Exhibits phosphatidate phosphatase (PAP) activity in vitro. May play a primary role as PAP in plastids. The polypeptide is Lipid phosphate phosphatase gamma (LPPG) (Arabidopsis thaliana (Mouse-ear cress)).